The following is a 459-amino-acid chain: Magnesium transporter MRS2-11, chloroplastic (459 aa).

A chloroplast-targeting transit peptide spans M1–K62. The segment at G76–S122 is disordered. Basic and acidic residues predominate over residues G101 to D110. A compositionally biased stretch (low complexity) spans S111–S122. 2 consecutive transmembrane segments (helical) span residues L397–G417 and A430–Y450. The short motif at G417 to N419 is the Required for magnesium transport activity element.

It belongs to the CorA metal ion transporter (MIT) (TC 1.A.35.5) family. In terms of tissue distribution, expressed in the green part of the plant. Preferentially expressed in the spongy mesophyll cells and stomata of young leaves but also detected in cotyledons and at the base of the leaf petioles.

It localises to the plastid. The protein localises to the chloroplast membrane. High-affinity magnesium transporter that mediates the influx of magnesium in chloroplast. The chain is Magnesium transporter MRS2-11, chloroplastic (MRS2-11) from Arabidopsis thaliana (Mouse-ear cress).